The chain runs to 533 residues: Drimenyl diphosphate synthase (533 aa).

4 residues coordinate (2E,6E)-farnesyl diphosphate: Arg-132, Lys-133, Gln-163, and Trp-165. Position 169 (Glu-169) interacts with Mg(2+). PFTB repeat units follow at residues 274-316 (VTPM…RRAA), 324-366 (VAEA…AHDP), 372-415 (VDEA…AAHG), 425-466 (AERA…ARGP), and 474-517 (LDRA…FVLL). The active-site Proton donor is Asp-303. Arg-501 is a (2E,6E)-farnesyl diphosphate binding site.

It belongs to the terpene cyclase/mutase family. Mg(2+) serves as cofactor. Requires Ni(2+) as cofactor. The cofactor is Co(2+).

The catalysed reaction is (2E,6E)-farnesyl diphosphate = (5S,9S,10S)-drim-7-en-11-yl diphosphate. In terms of biological role, catalyzes the cyclization of farnesyl diphosphate (FPP) to drimenyl diphosphate. Cannot use geranylgeranyl diphosphate (GGPP) as substrate. This is Drimenyl diphosphate synthase from Streptomyces showdoensis.